The chain runs to 271 residues: Tryptophan synthase alpha chain (271 aa).

Active-site proton acceptor residues include glutamate 59 and aspartate 70.

It belongs to the TrpA family. In terms of assembly, tetramer of two alpha and two beta chains.

The enzyme catalyses (1S,2R)-1-C-(indol-3-yl)glycerol 3-phosphate + L-serine = D-glyceraldehyde 3-phosphate + L-tryptophan + H2O. It participates in amino-acid biosynthesis; L-tryptophan biosynthesis; L-tryptophan from chorismate: step 5/5. In terms of biological role, the alpha subunit is responsible for the aldol cleavage of indoleglycerol phosphate to indole and glyceraldehyde 3-phosphate. In Methanosarcina mazei (strain ATCC BAA-159 / DSM 3647 / Goe1 / Go1 / JCM 11833 / OCM 88) (Methanosarcina frisia), this protein is Tryptophan synthase alpha chain.